We begin with the raw amino-acid sequence, 428 residues long: MAKGGSLYIVGIFLPIWTFMIYIFGKELFLIRKYQKIDSTYTALSQRVKEQYDTSRRRNYFPKVKLSRNSYDDYTLNYTRQNDSDSFHLRENATILMLVRNSELEGALDSMRSLEDRFNNKYHYDWTFLNDVPFDQDFIEATTSMASGKTQYALIPPEDWNRPQWINDTLFEERLRVMEDEGVLYGGSKSYRNMCRFNSGFFFRQSILDNYDYYFRVEPNVKYYCDFPYDPFRVMRLKGKKYGFVISLYEYEETIPTLWDAVEEYLVASEETILRKEDSAYAFLTDSGLVGKHYPVVEANSDYNLCHFWSNFEIGDLNFFRSDEYKHFFETLDAKGGFYYERWGDAPVHSIGVSLLLRPDEIIHFDELGYFHSPFGTCPASYAVRLDQRCRCKSDDESVIDITPHSCLMRWWKNGSGKYFLKEEQDEI.

Residues 1 to 3 (MAK) lie on the Cytoplasmic side of the membrane. Residues 4-24 (GGSLYIVGIFLPIWTFMIYIF) traverse the membrane as a helical; Signal-anchor for type II membrane protein segment. The segment at 25 to 88 (GKELFLIRKY…TRQNDSDSFH (64 aa)) is stem region. Topologically, residues 25-428 (GKELFLIRKY…YFLKEEQDEI (404 aa)) are lumenal. Asn-77, Asn-82, Asn-92, and Asn-167 each carry an N-linked (GlcNAc...) asparagine glycan. The catalytic stretch occupies residues 89–428 (LRENATILML…YFLKEEQDEI (340 aa)). Glu-313 serves as the catalytic Nucleophile. The N-linked (GlcNAc...) asparagine glycan is linked to Asn-414.

Belongs to the glycosyltransferase 15 family.

The protein localises to the golgi apparatus membrane. The protein operates within protein modification; protein glycosylation. Its function is as follows. Possible glycosyltransferase involved in N-linked glycosylation. Transfers an alpha-D-mannosyl residue from GDP-mannose into lipid-linked oligosaccharide, forming an alpha-(1-&gt;2)-D-mannosyl-D-mannose linkage. This Saccharomyces cerevisiae (strain ATCC 204508 / S288c) (Baker's yeast) protein is Probable mannosyltransferase YUR1 (YUR1).